The sequence spans 63 residues: Bowman-birk type proteinase inhibitor (63 aa).

Cystine bridges form between cysteine 7–cysteine 61, cysteine 8–cysteine 23, cysteine 11–cysteine 57, cysteine 13–cysteine 21, cysteine 31–cysteine 38, cysteine 35–cysteine 50, and cysteine 40–cysteine 48.

In terms of biological role, inhibits trypsin, chymotrypsin, plasmin and factor XIIa. Does not inhibit factor Xa, thrombin and plasma kallikrein. In Amburana acreana (Cerejeira), this protein is Bowman-birk type proteinase inhibitor.